Here is a 151-residue protein sequence, read N- to C-terminus: Sec-independent protein translocase protein TatB (151 aa).

Residues 1–21 (MFDVSFTELMVIGVIALVVIG) form a helical membrane-spanning segment. Residues 66–151 (MDETARSMQT…DKTPPTGSAT (86 aa)) are disordered. The span at 93–103 (AELDDTARDAS) shows a compositional bias: basic and acidic residues. Composition is skewed to low complexity over residues 109-122 (ADAP…VASD) and 133-151 (APPA…GSAT).

It belongs to the TatB family. As to quaternary structure, the Tat system comprises two distinct complexes: a TatABC complex, containing multiple copies of TatA, TatB and TatC subunits, and a separate TatA complex, containing only TatA subunits. Substrates initially bind to the TatABC complex, which probably triggers association of the separate TatA complex to form the active translocon.

Its subcellular location is the cell inner membrane. In terms of biological role, part of the twin-arginine translocation (Tat) system that transports large folded proteins containing a characteristic twin-arginine motif in their signal peptide across membranes. Together with TatC, TatB is part of a receptor directly interacting with Tat signal peptides. TatB may form an oligomeric binding site that transiently accommodates folded Tat precursor proteins before their translocation. The protein is Sec-independent protein translocase protein TatB of Bordetella parapertussis (strain 12822 / ATCC BAA-587 / NCTC 13253).